The following is a 406-amino-acid chain: Arginine biosynthesis bifunctional protein ArgJ (406 aa).

6 residues coordinate substrate: threonine 154, lysine 180, threonine 191, glutamate 278, asparagine 401, and threonine 406. Threonine 191 acts as the Nucleophile in catalysis.

Belongs to the ArgJ family. Heterotetramer of two alpha and two beta chains.

The protein resides in the cytoplasm. It catalyses the reaction N(2)-acetyl-L-ornithine + L-glutamate = N-acetyl-L-glutamate + L-ornithine. The catalysed reaction is L-glutamate + acetyl-CoA = N-acetyl-L-glutamate + CoA + H(+). Its pathway is amino-acid biosynthesis; L-arginine biosynthesis; L-ornithine and N-acetyl-L-glutamate from L-glutamate and N(2)-acetyl-L-ornithine (cyclic): step 1/1. It functions in the pathway amino-acid biosynthesis; L-arginine biosynthesis; N(2)-acetyl-L-ornithine from L-glutamate: step 1/4. In terms of biological role, catalyzes two activities which are involved in the cyclic version of arginine biosynthesis: the synthesis of N-acetylglutamate from glutamate and acetyl-CoA as the acetyl donor, and of ornithine by transacetylation between N(2)-acetylornithine and glutamate. In Gloeobacter violaceus (strain ATCC 29082 / PCC 7421), this protein is Arginine biosynthesis bifunctional protein ArgJ.